Consider the following 371-residue polypeptide: Peptide chain release factor 2 (371 aa).

Position 253 is an N5-methylglutamine (Gln-253).

The protein belongs to the prokaryotic/mitochondrial release factor family. In terms of processing, methylated by PrmC. Methylation increases the termination efficiency of RF2.

The protein resides in the cytoplasm. In terms of biological role, peptide chain release factor 2 directs the termination of translation in response to the peptide chain termination codons UGA and UAA. This chain is Peptide chain release factor 2, found in Mycobacterium sp. (strain JLS).